Here is a 289-residue protein sequence, read N- to C-terminus: Bis(5'-nucleosyl)-tetraphosphatase, symmetrical (289 aa).

It belongs to the Ap4A hydrolase family.

It carries out the reaction P(1),P(4)-bis(5'-adenosyl) tetraphosphate + H2O = 2 ADP + 2 H(+). Hydrolyzes diadenosine 5',5'''-P1,P4-tetraphosphate to yield ADP. In Pseudomonas fluorescens (strain ATCC BAA-477 / NRRL B-23932 / Pf-5), this protein is Bis(5'-nucleosyl)-tetraphosphatase, symmetrical.